Here is a 630-residue protein sequence, read N- to C-terminus: Pentatricopeptide repeat-containing protein At1g62670, mitochondrial (630 aa).

The N-terminal 22 residues, 1 to 22, are a transit peptide targeting the mitochondrion; sequence MRISFAIASTAKRFVHRSLVVR. PPR repeat units follow at residues 44 to 79, 80 to 114, 115 to 149, 150 to 184, 185 to 219, 220 to 254, 255 to 289, 290 to 324, 325 to 359, 360 to 394, 395 to 429, 430 to 464, 465 to 499, 500 to 534, 535 to 569, and 570 to 604; these read TSYDYREKLSRNGLSELKLDDAVALFGEMVKSRPFP, SIIEFSKLLSAIAKMNKFDVVISLGEQMQNLGIPH, NHYTYSILINCFCRRSQLPLALAVLGKMMKLGYEP, NIVTLSSLLNGYCHSKRISEAVALVDQMFVTGYQP, NTVTFNTLIHGLFLHNKASEAMALIDRMVAKGCQP, DLVTYGVVVNGLCKRGDTDLAFNLLNKMEQGKLEP, GVLIYNTIIDGLCKYKHMDDALNLFKEMETKGIRP, NVVTYSSLISCLCNYGRWSDASRLLSDMIERKINP, DVFTFSALIDAFVKEGKLVEAEKLYDEMVKRSIDP, SIVTYSSLINGFCMHDRLDEAKQMFEFMVSKHCFP, DVVTYNTLIKGFCKYKRVEEGMEVFREMSQRGLVG, NTVTYNILIQGLFQAGDCDMAQEIFKEMVSDGVPP, NIMTYNTLLDGLCKNGKLEKAMVVFEYLQRSKMEP, TIYTYNIMIEGMCKAGKVEDGWDLFCNLSLKGVKP, DVVAYNTMISGFCRKGSKEEADALFKEMKEDGTLP, and NSGCYNTLIRARLRDGDREASAELIKEMRSCGFAG.

It belongs to the PPR family. P subfamily.

The protein resides in the mitochondrion. The polypeptide is Pentatricopeptide repeat-containing protein At1g62670, mitochondrial (Arabidopsis thaliana (Mouse-ear cress)).